We begin with the raw amino-acid sequence, 1199 residues long: DNA-directed RNA polymerase subunit beta' (1199 aa).

Zn(2+)-binding residues include cysteine 60, cysteine 62, cysteine 75, and cysteine 78. Residues aspartate 449, aspartate 451, and aspartate 453 each contribute to the Mg(2+) site. Cysteine 818, cysteine 892, cysteine 899, and cysteine 902 together coordinate Zn(2+).

The protein belongs to the RNA polymerase beta' chain family. In terms of assembly, the RNAP catalytic core consists of 2 alpha, 1 beta, 1 beta' and 1 omega subunit. When a sigma factor is associated with the core the holoenzyme is formed, which can initiate transcription. Mg(2+) serves as cofactor. Requires Zn(2+) as cofactor.

The catalysed reaction is RNA(n) + a ribonucleoside 5'-triphosphate = RNA(n+1) + diphosphate. Its function is as follows. DNA-dependent RNA polymerase catalyzes the transcription of DNA into RNA using the four ribonucleoside triphosphates as substrates. The polypeptide is DNA-directed RNA polymerase subunit beta' (Bacillus pumilus (strain SAFR-032)).